A 244-amino-acid chain; its full sequence is 3-oxoacyl-[acyl-carrier-protein] reductase FabG (244 aa).

NADP(+) is bound by residues 12-15 (GASR), Thr37, 59-60 (NV), and Asn86. Position 138 (Ser138) interacts with substrate. Catalysis depends on Tyr151, which acts as the Proton acceptor. Residues 151–155 (YAAAK) and Ile184 contribute to the NADP(+) site.

Belongs to the short-chain dehydrogenases/reductases (SDR) family. As to quaternary structure, homotetramer.

It catalyses the reaction a (3R)-hydroxyacyl-[ACP] + NADP(+) = a 3-oxoacyl-[ACP] + NADPH + H(+). It functions in the pathway lipid metabolism; fatty acid biosynthesis. In terms of biological role, catalyzes the NADPH-dependent reduction of beta-ketoacyl-ACP substrates to beta-hydroxyacyl-ACP products, the first reductive step in the elongation cycle of fatty acid biosynthesis. The chain is 3-oxoacyl-[acyl-carrier-protein] reductase FabG (fabG) from Vibrio harveyi (Beneckea harveyi).